Here is a 57-residue protein sequence, read N- to C-terminus: MALTCTDIPKFICAVLLPPIGVFLEKGCDYHLAICILLTILGYIPGIIYACYVILAY.

Transmembrane regions (helical) follow at residues 4 to 24 (TCTD…GVFL) and 36 to 56 (ILLT…VILA).

It belongs to the UPF0057 (PMP3) family.

The protein localises to the membrane. This is UPF0057 membrane protein T23F2.3 from Caenorhabditis elegans.